The following is a 135-amino-acid chain: ATP synthase epsilon chain (135 aa).

Belongs to the ATPase epsilon chain family. In terms of assembly, F-type ATPases have 2 components, CF(1) - the catalytic core - and CF(0) - the membrane proton channel. CF(1) has five subunits: alpha(3), beta(3), gamma(1), delta(1), epsilon(1). CF(0) has three main subunits: a, b and c.

It localises to the cell inner membrane. Functionally, produces ATP from ADP in the presence of a proton gradient across the membrane. The sequence is that of ATP synthase epsilon chain from Mesorhizobium japonicum (strain LMG 29417 / CECT 9101 / MAFF 303099) (Mesorhizobium loti (strain MAFF 303099)).